A 199-amino-acid chain; its full sequence is Recombination protein RecR (199 aa).

A C4-type zinc finger spans residues 57–72; the sequence is CTVCGHITDIDPCAIC. The Toprim domain maps to 80–176; sequence TVVCVVQDSR…RVTRLAHGLP (97 aa).

Belongs to the RecR family.

In terms of biological role, may play a role in DNA repair. It seems to be involved in an RecBC-independent recombinational process of DNA repair. It may act with RecF and RecO. In Exiguobacterium sp. (strain ATCC BAA-1283 / AT1b), this protein is Recombination protein RecR.